The following is a 422-amino-acid chain: 2,3-bisphosphoglycerate-independent phosphoglycerate mutase (422 aa).

A disordered region spans residues 173–194 (DADPKRVGKPVKDVKPTSDDPA). Over residues 174 to 190 (ADPKRVGKPVKDVKPTS) the composition is skewed to basic and acidic residues.

It belongs to the BPG-independent phosphoglycerate mutase family. A-PGAM subfamily.

It catalyses the reaction (2R)-2-phosphoglycerate = (2R)-3-phosphoglycerate. It participates in carbohydrate degradation; glycolysis; pyruvate from D-glyceraldehyde 3-phosphate: step 3/5. Catalyzes the interconversion of 2-phosphoglycerate and 3-phosphoglycerate. The chain is 2,3-bisphosphoglycerate-independent phosphoglycerate mutase from Methanopyrus kandleri (strain AV19 / DSM 6324 / JCM 9639 / NBRC 100938).